A 126-amino-acid chain; its full sequence is Ribosome-binding factor A (126 aa).

Belongs to the RbfA family. Monomer. Binds 30S ribosomal subunits, but not 50S ribosomal subunits or 70S ribosomes.

The protein resides in the cytoplasm. Its function is as follows. One of several proteins that assist in the late maturation steps of the functional core of the 30S ribosomal subunit. Associates with free 30S ribosomal subunits (but not with 30S subunits that are part of 70S ribosomes or polysomes). Required for efficient processing of 16S rRNA. May interact with the 5'-terminal helix region of 16S rRNA. This is Ribosome-binding factor A from Halorhodospira halophila (strain DSM 244 / SL1) (Ectothiorhodospira halophila (strain DSM 244 / SL1)).